The sequence spans 211 residues: Riboflavin kinase (211 aa).

Residues 1 to 85 (MKKILMLIEL…CDKISNALSK (85 aa)) form an H-T-H motif-like region. Residues 86–211 (GVIVGEVVSG…GDRVRLEVIQ (126 aa)) form a riboflavin kinase region. Residue 95–100 (GLGEGA) participates in CDP binding. 2 residues coordinate Mg(2+): Thr-122 and Asn-124. FMN contacts are provided by Thr-178 and Glu-186. Residue 191–194 (VNLR) coordinates CDP.

Belongs to the archaeal riboflavin kinase family. Mg(2+) serves as cofactor.

The catalysed reaction is riboflavin + CTP = CDP + FMN + H(+). Its pathway is cofactor biosynthesis; FMN biosynthesis; FMN from riboflavin (CTP route): step 1/1. Its function is as follows. Catalyzes the CTP-dependent phosphorylation of riboflavin (vitamin B2) to form flavin mononucleotide (FMN). The protein is Riboflavin kinase (ribK) of Thermococcus kodakarensis (strain ATCC BAA-918 / JCM 12380 / KOD1) (Pyrococcus kodakaraensis (strain KOD1)).